The following is a 201-amino-acid chain: Potassium-transporting ATPase KdpC subunit (201 aa).

Residues 12–34 (LLALTMITGLAYPLAVTGLATVL) form a helical membrane-spanning segment. The tract at residues 73-102 (TVAPDPADSSKTVSAPYNAANSGGSNLGPT) is disordered. A compositionally biased stretch (polar residues) spans 81–101 (SSKTVSAPYNAANSGGSNLGP).

This sequence belongs to the KdpC family. The system is composed of three essential subunits: KdpA, KdpB and KdpC.

The protein resides in the cell inner membrane. Functionally, part of the high-affinity ATP-driven potassium transport (or Kdp) system, which catalyzes the hydrolysis of ATP coupled with the electrogenic transport of potassium into the cytoplasm. This subunit acts as a catalytic chaperone that increases the ATP-binding affinity of the ATP-hydrolyzing subunit KdpB by the formation of a transient KdpB/KdpC/ATP ternary complex. This is Potassium-transporting ATPase KdpC subunit from Rhodopseudomonas palustris (strain ATCC BAA-98 / CGA009).